The chain runs to 350 residues: S-adenosylmethionine:tRNA ribosyltransferase-isomerase (350 aa).

This sequence belongs to the QueA family. Monomer.

It is found in the cytoplasm. The catalysed reaction is 7-aminomethyl-7-carbaguanosine(34) in tRNA + S-adenosyl-L-methionine = epoxyqueuosine(34) in tRNA + adenine + L-methionine + 2 H(+). The protein operates within tRNA modification; tRNA-queuosine biosynthesis. Transfers and isomerizes the ribose moiety from AdoMet to the 7-aminomethyl group of 7-deazaguanine (preQ1-tRNA) to give epoxyqueuosine (oQ-tRNA). In Bacillus cereus (strain 03BB102), this protein is S-adenosylmethionine:tRNA ribosyltransferase-isomerase.